Reading from the N-terminus, the 698-residue chain is Iron-sulfur clusters transporter ATM1, mitochondrial (698 aa).

The transit peptide at 1–23 (MIPQLLQRSSRACPRYNPALYRL) directs the protein to the mitochondrion. Topologically, residues 24 to 113 (STTSQQRPGL…PKDDWGTKLR (90 aa)) are mitochondrial matrix. The segment at 32-63 (GLTQTFWTSAPRREQPRTPTDSKPTTTKPSAV) is disordered. Low complexity predominate over residues 48 to 61 (RTPTDSKPTTTKPS). Residues 114 to 135 (VSLAVSLLIGAKVLNVQVPFYF) traverse the membrane as a helical segment. The ABC transmembrane type-1 domain occupies 114–404 (VSLAVSLLIG…LGSVYRELRQ (291 aa)). Over 136-158 (KSIVDSMNIDVAAVGGTATTVAG) the chain is Mitochondrial intermembrane. Residues 159–182 (AMILAYGASRIGATVFQELRNAVF) form a helical membrane-spanning segment. The Mitochondrial matrix segment spans residues 183-231 (ASVAQNAIRKVACNVFDHLLRLDLTFHLSKQTGGLTRALDRGTKGISFI). The chain crosses the membrane as a helical span at residues 232 to 255 (LSSMVFHVLPTALEISMVCGILTY). Position 256 (Asn-256) is a topological domain, mitochondrial intermembrane. A helical membrane pass occupies residues 257-277 (YGAKFAALTVLTMVSYTAFTI). Over 278–343 (WTTAWRTKFR…NSIKVATSLA (66 aa)) the chain is Mitochondrial matrix. Residues 283–287 (RTKFR) and 346–349 (NSGQ) contribute to the glutathione site. A helical membrane pass occupies residues 344–362 (LLNSGQNIIFSSALTGMMY). Residues 363–377 (LAANGVAEGTLTVGD) are Mitochondrial intermembrane-facing. A helical transmembrane segment spans residues 378–399 (LVMVNQLVFQLSVPLNFLGSVY). Residue Gly-396 participates in glutathione binding. Residues 400-698 (RELRQSLLDM…EEENDEQKKN (299 aa)) are Mitochondrial matrix-facing. One can recognise an ABC transporter domain in the interval 439 to 675 (IKFENVNFAY…DGVYAELWSA (237 aa)). Residues Tyr-448 and 472–483 (GPSGCGKSTLLR) contribute to the ATP site. Residues 679 to 698 (MFGEDGKEKSEEENDEQKKN) are disordered. Over residues 682 to 698 (EDGKEKSEEENDEQKKN) the composition is skewed to basic and acidic residues.

It belongs to the ABC transporter superfamily. ABCB family. Heavy Metal importer (TC 3.A.1.210) subfamily. As to quaternary structure, homodimer.

It is found in the mitochondrion inner membrane. Functionally, performs an essential function in the generation of cytoplasmic iron-sulfur proteins by mediating the ATP-dependent export of Fe/S cluster precursors synthesized by NFS1 and other mitochondrial proteins. Hydrolyzes ATP. Binds glutathione and may function by transporting a glutathione-conjugated iron-sulfur compound. The protein is Iron-sulfur clusters transporter ATM1, mitochondrial of Gibberella zeae (strain ATCC MYA-4620 / CBS 123657 / FGSC 9075 / NRRL 31084 / PH-1) (Wheat head blight fungus).